A 213-amino-acid polypeptide reads, in one-letter code: Large ribosomal subunit protein uL1 (213 aa).

Belongs to the universal ribosomal protein uL1 family. In terms of assembly, part of the 50S ribosomal subunit.

Binds directly to 23S rRNA. Probably involved in E site tRNA release. Its function is as follows. Protein L1 is also a translational repressor protein, it controls the translation of its operon by binding to its mRNA. The chain is Large ribosomal subunit protein uL1 from Methanocorpusculum labreanum (strain ATCC 43576 / DSM 4855 / Z).